Reading from the N-terminus, the 386-residue chain is Formate-dependent phosphoribosylglycinamide formyltransferase (386 aa).

Residues 15-16 and Glu75 contribute to the N(1)-(5-phospho-beta-D-ribosyl)glycinamide site; that span reads EL. ATP contacts are provided by residues Arg107, Lys148, 153–158, 188–191, and Glu196; these read SSGKGQ and EQFI. The 190-residue stretch at 112 to 301 folds into the ATP-grasp domain; that stretch reads ALAAQQLNLQ…EFELHLRAIV (190 aa). Mg(2+) contacts are provided by Glu260 and Glu272. N(1)-(5-phospho-beta-D-ribosyl)glycinamide-binding positions include Asp279, Lys349, and 356-357; that span reads RR.

Belongs to the PurK/PurT family. Homodimer.

It carries out the reaction N(1)-(5-phospho-beta-D-ribosyl)glycinamide + formate + ATP = N(2)-formyl-N(1)-(5-phospho-beta-D-ribosyl)glycinamide + ADP + phosphate + H(+). The protein operates within purine metabolism; IMP biosynthesis via de novo pathway; N(2)-formyl-N(1)-(5-phospho-D-ribosyl)glycinamide from N(1)-(5-phospho-D-ribosyl)glycinamide (formate route): step 1/1. Its function is as follows. Involved in the de novo purine biosynthesis. Catalyzes the transfer of formate to 5-phospho-ribosyl-glycinamide (GAR), producing 5-phospho-ribosyl-N-formylglycinamide (FGAR). Formate is provided by PurU via hydrolysis of 10-formyl-tetrahydrofolate. The sequence is that of Formate-dependent phosphoribosylglycinamide formyltransferase from Francisella tularensis subsp. tularensis (strain SCHU S4 / Schu 4).